Consider the following 294-residue polypeptide: Phosphatidylserine decarboxylase proenzyme (294 aa).

Residues Asp-100, His-157, and Ser-261 each act as charge relay system; for autoendoproteolytic cleavage activity in the active site. Ser-261 serves as the catalytic Schiff-base intermediate with substrate; via pyruvic acid; for decarboxylase activity. Ser-261 carries the pyruvic acid (Ser); by autocatalysis modification.

Belongs to the phosphatidylserine decarboxylase family. PSD-B subfamily. Prokaryotic type I sub-subfamily. Heterodimer of a large membrane-associated beta subunit and a small pyruvoyl-containing alpha subunit. Pyruvate serves as cofactor. In terms of processing, is synthesized initially as an inactive proenzyme. Formation of the active enzyme involves a self-maturation process in which the active site pyruvoyl group is generated from an internal serine residue via an autocatalytic post-translational modification. Two non-identical subunits are generated from the proenzyme in this reaction, and the pyruvate is formed at the N-terminus of the alpha chain, which is derived from the carboxyl end of the proenzyme. The autoendoproteolytic cleavage occurs by a canonical serine protease mechanism, in which the side chain hydroxyl group of the serine supplies its oxygen atom to form the C-terminus of the beta chain, while the remainder of the serine residue undergoes an oxidative deamination to produce ammonia and the pyruvoyl prosthetic group on the alpha chain. During this reaction, the Ser that is part of the protease active site of the proenzyme becomes the pyruvoyl prosthetic group, which constitutes an essential element of the active site of the mature decarboxylase.

The protein resides in the cell membrane. It catalyses the reaction a 1,2-diacyl-sn-glycero-3-phospho-L-serine + H(+) = a 1,2-diacyl-sn-glycero-3-phosphoethanolamine + CO2. It participates in phospholipid metabolism; phosphatidylethanolamine biosynthesis; phosphatidylethanolamine from CDP-diacylglycerol: step 2/2. Catalyzes the formation of phosphatidylethanolamine (PtdEtn) from phosphatidylserine (PtdSer). This Histophilus somni (strain 2336) (Haemophilus somnus) protein is Phosphatidylserine decarboxylase proenzyme.